We begin with the raw amino-acid sequence, 394 residues long: Cobalt-precorrin-5B C(1)-methyltransferase (394 aa).

It belongs to the CbiD family.

It catalyses the reaction Co-precorrin-5B + S-adenosyl-L-methionine = Co-precorrin-6A + S-adenosyl-L-homocysteine. It participates in cofactor biosynthesis; adenosylcobalamin biosynthesis; cob(II)yrinate a,c-diamide from sirohydrochlorin (anaerobic route): step 6/10. In terms of biological role, catalyzes the methylation of C-1 in cobalt-precorrin-5B to form cobalt-precorrin-6A. The chain is Cobalt-precorrin-5B C(1)-methyltransferase from Clostridium beijerinckii (strain ATCC 51743 / NCIMB 8052) (Clostridium acetobutylicum).